We begin with the raw amino-acid sequence, 301 residues long: TLR adapter interacting with SLC15A4 on the lysosome (301 aa).

The pLxIS motif signature appears at Ser290–Ser294. Position 294 is a phosphoserine (Ser294).

In terms of assembly, interacts (via pLxIS motif) with IRF5; leading to IRF5 activation. Interacts with SLC15A4; leading to its recruitment to endolysosome. Post-translationally, the phosphorylated pLxIS motif constitutes an IRF5-binding motif, leading to recruitment of the transcription factor IRF5 to induce type-I interferons and other cytokines. As to expression, highly expressed in immune cell types such as B-cells, neutrophils, dendritic cells and monocytes, the expression levels are two-three-fold higher in female cells compared to male cells (at protein level). Expressed at low levels in T-cells and NK cells.

The protein resides in the lysosome membrane. It localises to the endosome membrane. The protein localises to the nucleus. Its subcellular location is the cytoplasm. Its function is as follows. Innate immune adapter that mediates the recruitment and activation of IRF5 downstream of endolysosomal toll-like receptors TLR7, TLR8 and TLR9. Following recruitment to endolysosome by SLC15A4 downstream of TLR7, TLR8 and TLR9, specifically recruits IRF5 transcription factor via its pLxIS motif, leading to IRF5 activation and subsequent expression of type I interferons. Plays a role in the regulation of endolysosomal pH in immune cells such as B-cells, dendritic cells and monocytes. This chain is TLR adapter interacting with SLC15A4 on the lysosome, found in Homo sapiens (Human).